We begin with the raw amino-acid sequence, 566 residues long: DNA ligase B (566 aa).

Lys125 acts as the N6-AMP-lysine intermediate in catalysis.

Belongs to the NAD-dependent DNA ligase family. LigB subfamily.

It carries out the reaction NAD(+) + (deoxyribonucleotide)n-3'-hydroxyl + 5'-phospho-(deoxyribonucleotide)m = (deoxyribonucleotide)n+m + AMP + beta-nicotinamide D-nucleotide.. Catalyzes the formation of phosphodiester linkages between 5'-phosphoryl and 3'-hydroxyl groups in double-stranded DNA using NAD as a coenzyme and as the energy source for the reaction. The polypeptide is DNA ligase B (Pseudomonas putida (strain ATCC 47054 / DSM 6125 / CFBP 8728 / NCIMB 11950 / KT2440)).